Consider the following 248-residue polypeptide: uncharacterized protein (248 aa).

The helical transmembrane segment at 104–122 threads the bilayer; the sequence is CDVAACVGATWIAGGFAGA.

The protein resides in the membrane. This is an uncharacterized protein from Escherichia coli (strain K12).